We begin with the raw amino-acid sequence, 175 residues long: Inorganic pyrophosphatase 1 (175 aa).

Positions 30, 44, and 56 each coordinate substrate. 3 residues coordinate Mg(2+): D66, D71, and D103. Y142 provides a ligand contact to substrate.

This sequence belongs to the PPase family. As to quaternary structure, homohexamer. Requires Mg(2+) as cofactor.

It is found in the cytoplasm. It catalyses the reaction diphosphate + H2O = 2 phosphate + H(+). Functionally, catalyzes the hydrolysis of inorganic pyrophosphate (PPi) forming two phosphate ions. The chain is Inorganic pyrophosphatase 1 from Pseudomonas syringae pv. tomato (strain ATCC BAA-871 / DC3000).